A 430-amino-acid polypeptide reads, in one-letter code: Serine--tRNA ligase (430 aa).

The segment at 47-66 (AQAEQNKASKEAGAAKGRGD) is disordered. 231 to 233 (TSE) contacts L-serine. 262–264 (RSE) provides a ligand contact to ATP. Glutamate 285 contributes to the L-serine binding site. Residue 349–352 (EISS) coordinates ATP. Serine 385 is an L-serine binding site.

This sequence belongs to the class-II aminoacyl-tRNA synthetase family. Type-1 seryl-tRNA synthetase subfamily. Homodimer. The tRNA molecule binds across the dimer.

The protein localises to the cytoplasm. The enzyme catalyses tRNA(Ser) + L-serine + ATP = L-seryl-tRNA(Ser) + AMP + diphosphate + H(+). It catalyses the reaction tRNA(Sec) + L-serine + ATP = L-seryl-tRNA(Sec) + AMP + diphosphate + H(+). It participates in aminoacyl-tRNA biosynthesis; selenocysteinyl-tRNA(Sec) biosynthesis; L-seryl-tRNA(Sec) from L-serine and tRNA(Sec): step 1/1. Catalyzes the attachment of serine to tRNA(Ser). Is also able to aminoacylate tRNA(Sec) with serine, to form the misacylated tRNA L-seryl-tRNA(Sec), which will be further converted into selenocysteinyl-tRNA(Sec). This is Serine--tRNA ligase from Paracoccus denitrificans (strain Pd 1222).